The following is a 178-amino-acid chain: 2-C-methyl-D-erythritol 2,4-cyclodiphosphate synthase (178 aa).

A divalent metal cation contacts are provided by Asp-24, His-26, and His-61. Residue 24–26 participates in 4-CDP-2-C-methyl-D-erythritol 2-phosphate binding; it reads DSH. 4-CDP-2-C-methyl-D-erythritol 2-phosphate is bound at residue 150-153; it reads TSGE.

It belongs to the IspF family. As to quaternary structure, homotrimer. A divalent metal cation serves as cofactor.

The catalysed reaction is 4-CDP-2-C-methyl-D-erythritol 2-phosphate = 2-C-methyl-D-erythritol 2,4-cyclic diphosphate + CMP. Its pathway is isoprenoid biosynthesis; isopentenyl diphosphate biosynthesis via DXP pathway; isopentenyl diphosphate from 1-deoxy-D-xylulose 5-phosphate: step 4/6. Functionally, involved in the biosynthesis of isopentenyl diphosphate (IPP) and dimethylallyl diphosphate (DMAPP), two major building blocks of isoprenoid compounds. Catalyzes the conversion of 4-diphosphocytidyl-2-C-methyl-D-erythritol 2-phosphate (CDP-ME2P) to 2-C-methyl-D-erythritol 2,4-cyclodiphosphate (ME-CPP) with a corresponding release of cytidine 5-monophosphate (CMP). The polypeptide is 2-C-methyl-D-erythritol 2,4-cyclodiphosphate synthase (Chlamydia trachomatis serovar A (strain ATCC VR-571B / DSM 19440 / HAR-13)).